A 347-amino-acid polypeptide reads, in one-letter code: GMP reductase (347 aa).

Residue 108-131 participates in NADP(+) binding; the sequence is ADFEKTKQILDLNSALNFVCIDVA. Residues G181 and G183 each contribute to the K(+) site. The active-site Thioimidate intermediate is C186. 216–239 is an NADP(+) binding site; sequence IVSDGGCTTPGDVAKAFGGGADFV.

Belongs to the IMPDH/GMPR family. GuaC type 1 subfamily. As to quaternary structure, homotetramer.

The catalysed reaction is IMP + NH4(+) + NADP(+) = GMP + NADPH + 2 H(+). Its function is as follows. Catalyzes the irreversible NADPH-dependent deamination of GMP to IMP. It functions in the conversion of nucleobase, nucleoside and nucleotide derivatives of G to A nucleotides, and in maintaining the intracellular balance of A and G nucleotides. The chain is GMP reductase from Escherichia coli O81 (strain ED1a).